Reading from the N-terminus, the 229-residue chain is DNA mismatch repair protein MutH (229 aa).

The protein belongs to the MutH family.

The protein localises to the cytoplasm. In terms of biological role, sequence-specific endonuclease that cleaves unmethylated GATC sequences. It is involved in DNA mismatch repair. This chain is DNA mismatch repair protein MutH, found in Escherichia coli O6:K15:H31 (strain 536 / UPEC).